The primary structure comprises 123 residues: Large ribosomal subunit protein uL14 (123 aa).

It belongs to the universal ribosomal protein uL14 family. In terms of assembly, part of the 50S ribosomal subunit. Forms a cluster with proteins L3 and L19. In the 70S ribosome, L14 and L19 interact and together make contacts with the 16S rRNA in bridges B5 and B8.

In terms of biological role, binds to 23S rRNA. Forms part of two intersubunit bridges in the 70S ribosome. This Enterobacter sp. (strain 638) protein is Large ribosomal subunit protein uL14.